A 278-amino-acid chain; its full sequence is Glycerophosphodiester phosphodiesterase GpdQ (278 aa).

Fe cation is bound by residues aspartate 8, histidine 10, aspartate 50, asparagine 80, histidine 156, histidine 195, and histidine 197.

This sequence belongs to the cyclic nucleotide phosphodiesterase class-III family. Fe(2+) serves as cofactor.

It catalyses the reaction a sn-glycero-3-phosphodiester + H2O = an alcohol + sn-glycerol 3-phosphate + H(+). The catalysed reaction is sn-glycero-3-phosphoethanolamine + H2O = ethanolamine + sn-glycerol 3-phosphate + H(+). Its function is as follows. Catalyzes the hydrolysis of the 3'-5' phosphodiester bond of glycerophosphodiesters such as glycerophosphorylethanolamine (GPE), a typical phospholipid metabolite. The sequence is that of Glycerophosphodiester phosphodiesterase GpdQ from Enterobacter lignolyticus (strain SCF1).